A 513-amino-acid chain; its full sequence is ATP synthase subunit alpha (513 aa).

169-176 lines the ATP pocket; sequence GDRQTGKT.

This sequence belongs to the ATPase alpha/beta chains family. As to quaternary structure, F-type ATPases have 2 components, CF(1) - the catalytic core - and CF(0) - the membrane proton channel. CF(1) has five subunits: alpha(3), beta(3), gamma(1), delta(1), epsilon(1). CF(0) has three main subunits: a(1), b(2) and c(9-12). The alpha and beta chains form an alternating ring which encloses part of the gamma chain. CF(1) is attached to CF(0) by a central stalk formed by the gamma and epsilon chains, while a peripheral stalk is formed by the delta and b chains.

It is found in the cell inner membrane. It catalyses the reaction ATP + H2O + 4 H(+)(in) = ADP + phosphate + 5 H(+)(out). Produces ATP from ADP in the presence of a proton gradient across the membrane. The alpha chain is a regulatory subunit. The protein is ATP synthase subunit alpha of Glaesserella parasuis serovar 5 (strain SH0165) (Haemophilus parasuis).